Reading from the N-terminus, the 268-residue chain is MNNIMIGRFVPGNSWIHRLDPRTKMIVTFVYIIVMLWASNWQTYAWTAAFVVAMVKLTDQPFKLYWDGLKPIFWLILFTVILQLLFTPGTPILFSVGPFQVTVPGILNAIYVMVRFVLIILMSTILTLTTPPTSIANALESLLSPLKKIGVPVAELALMLAIALRFVPLLMDEMQKIMNAQKSRGMSFSTGGPIKRAKAIIPLLIPLFIGALQRALDLANAMEVRGFKDAVQRTKYRILSYQKIDKVAFAALIGFVIIFFVIKTWLHG.

Transmembrane regions (helical) follow at residues 26-46 (IVTFVYIIVMLWASNWQTYAW), 72-92 (IFWLILFTVILQLLFTPGTPI), 106-126 (ILNAIYVMVRFVLIILMSTIL), 149-169 (IGVPVAELALMLAIALRFVPL), and 247-267 (VAFAALIGFVIIFFVIKTWLH).

It belongs to the energy-coupling factor EcfT family. In terms of assembly, forms a stable energy-coupling factor (ECF) transporter complex composed of 2 membrane-embedded substrate-binding proteins (S component), 2 ATP-binding proteins (A component) and 2 transmembrane proteins (T component). May be able to interact with more than 1 S component at a time.

The protein resides in the cell membrane. Transmembrane (T) component of an energy-coupling factor (ECF) ABC-transporter complex. Unlike classic ABC transporters this ECF transporter provides the energy necessary to transport a number of different substrates. The chain is Energy-coupling factor transporter transmembrane protein EcfT from Leuconostoc gelidum subsp. gasicomitatum (strain DSM 15947 / CCUG 46042 / CECT 5767 / JCM 12535 / LMG 18811 / NBRC 113245 / TB1-10) (Leuconostoc gasicomitatum).